Consider the following 435-residue polypeptide: Cytokine-dependent hematopoietic cell linker (435 aa).

Phosphotyrosine; by LYN is present on residues Tyr69 and Tyr96. Residues 155 to 303 form a disordered region; the sequence is KINKTPLPPP…PDPTKPDEKD (149 aa). A mediates interaction with PLCG1; essential for BCR signaling; involved in restoration of BCR-induced calcium response and ERK2 and JNK2 activation in BLNK-deficient cells expressing LAT region spans residues 160-165; sequence PLPPPR. Residues 178–182 form a mediates interaction with LAT, GRB2, and FGR; involved in translocation to the glycolipid-enriched microdomain and restoration of BCR-induced calcium response in BLNK-deficient DT40 cells expressing LAT region; sequence PPAPP. Polar residues predominate over residues 226 to 249; the sequence is PESSCPSSNQNTQKSPPAIASSSY. Over residues 290-303 the composition is skewed to basic and acidic residues; sequence NSEKPDPTKPDEKD. In terms of domain architecture, SH2 spans 309–418; that stretch reads WYIGEYSRQA…RKQCYLTQPL (110 aa).

When phosphorylated, interacts with PLCG1, PLCG2, GRB2, VAV and LAT. Associated with a tyrosine-phosphorylated polypeptide (p92) in response to immunoreceptor stimulation. Interacts with LBR and AGO2. Interacts with FGR. Part of a complex consisting of CLNK, SKAP1 and FYB1. Interacts (via SH2 domain) with FYB1; this interaction allows SKAP1 and FYB1 to promote tyrosine phosphorylation of CLNK by LYN. Interacts (via SH2 domain) with MAP4K1. Tyrosine-phosphorylated upon BCR cross-linking. Tyrosine phosphorylation at both Tyr-69 and Tyr-96 are required for BCR-induced calcium response and are essential to restore PLCG2-mediated signaling in BLNK-deficient DT40 cells, but this phosphorylation is dispensable in cells expressing LAT. Interacts with the SH2 domain of PLCG1 via phosphorylated Tyr-96. Tyrosine phosphorylation is increased when complexed with SKAP1 and FYB1. In terms of tissue distribution, expressed in T-cells, mast cells, natural killer and natural killer T cells (at protein level). Expressed in cytokine-stimulated hemopoietic cells.

It is found in the cytoplasm. In terms of biological role, an adapter protein which plays a role in the regulation of immunoreceptor signaling, including PLC-gamma-mediated B-cell antigen receptor (BCR) signaling and FC-epsilon R1-mediated mast cell degranulation. Together with FGR, it acts as a negative regulator of natural killer cell-activating receptors and inhibits interferon-gamma production. Acts as a positive regulator of both T-cell receptor and natural killer T (NKT) cell receptor signaling in CD4-positive NKT cells. Together with MAP4K1, it enhances CD3-triggered activation of T-cells and subsequent IL2 production. May be involved in tumor necrosis factor induced cell death by promoting reactive oxidative species generation, and MLKL oligomerization, ultimately leading to necrosis. Involved in phosphorylation of LAT. May be involved in high affinity immunoglobulin epsilon receptor signaling in mast cells. This Mus musculus (Mouse) protein is Cytokine-dependent hematopoietic cell linker (Clnk).